The sequence spans 201 residues: MSRYTGPSWRLSRRLGVSLSGTGKELARRPYAPGDHGNDRRGKLSEYGTQLREKQKLRFMYGMTERQFSNLFVRAGKIKEGTHGTNFMVLLERRLDNMVYRLGLATTRRQARQLVNHGHITVDGKRVDIPSYEVKVGQVIAVREKSKNLDVIKGAVEAVVARPAYVEFDADKLEGKLTRLPQREDMNADIDEALIVEFYNK.

The interval 22-47 is disordered; the sequence is TGKELARRPYAPGDHGNDRRGKLSEY. An S4 RNA-binding domain is found at 93-153; sequence RRLDNMVYRL…EKSKNLDVIK (61 aa).

It belongs to the universal ribosomal protein uS4 family. In terms of assembly, part of the 30S ribosomal subunit. Contacts protein S5. The interaction surface between S4 and S5 is involved in control of translational fidelity.

In terms of biological role, one of the primary rRNA binding proteins, it binds directly to 16S rRNA where it nucleates assembly of the body of the 30S subunit. Functionally, with S5 and S12 plays an important role in translational accuracy. This chain is Small ribosomal subunit protein uS4, found in Limosilactobacillus fermentum (strain NBRC 3956 / LMG 18251) (Lactobacillus fermentum).